The following is a 431-amino-acid chain: Enolase (431 aa).

Residue Gln-167 coordinates (2R)-2-phosphoglycerate. Glu-209 acts as the Proton donor in catalysis. 3 residues coordinate Mg(2+): Asp-246, Glu-289, and Asp-316. (2R)-2-phosphoglycerate-binding residues include Lys-341, Arg-370, Ser-371, and Lys-392. The Proton acceptor role is filled by Lys-341.

This sequence belongs to the enolase family. As to quaternary structure, component of the RNA degradosome, a multiprotein complex involved in RNA processing and mRNA degradation. The cofactor is Mg(2+).

The protein localises to the cytoplasm. Its subcellular location is the secreted. It localises to the cell surface. It carries out the reaction (2R)-2-phosphoglycerate = phosphoenolpyruvate + H2O. The protein operates within carbohydrate degradation; glycolysis; pyruvate from D-glyceraldehyde 3-phosphate: step 4/5. Functionally, catalyzes the reversible conversion of 2-phosphoglycerate (2-PG) into phosphoenolpyruvate (PEP). It is essential for the degradation of carbohydrates via glycolysis. This is Enolase from Shewanella baltica (strain OS223).